Here is a 196-residue protein sequence, read N- to C-terminus: Anthranilate synthase component 2 (196 aa).

Residues Asn-3–Ala-196 form the Glutamine amidotransferase type-1 domain. Gly-57–Gly-59 is a binding site for L-glutamine. Cys-84 serves as the catalytic Nucleophile; for GATase activity. L-glutamine is bound by residues Gln-88 and Ser-134–Leu-135. Active-site for GATase activity residues include His-170 and Glu-172.

Heterotetramer consisting of two non-identical subunits: a beta subunit (TrpG) and a large alpha subunit (TrpE).

The enzyme catalyses chorismate + L-glutamine = anthranilate + pyruvate + L-glutamate + H(+). Its pathway is amino-acid biosynthesis; L-tryptophan biosynthesis; L-tryptophan from chorismate: step 1/5. In terms of biological role, part of a heterotetrameric complex that catalyzes the two-step biosynthesis of anthranilate, an intermediate in the biosynthesis of L-tryptophan. In the first step, the glutamine-binding beta subunit (TrpG) of anthranilate synthase (AS) provides the glutamine amidotransferase activity which generates ammonia as a substrate that, along with chorismate, is used in the second step, catalyzed by the large alpha subunit of AS (TrpE) to produce anthranilate. In the absence of TrpG, TrpE can synthesize anthranilate directly from chorismate and high concentrations of ammonia. In Vibrio parahaemolyticus serotype O3:K6 (strain RIMD 2210633), this protein is Anthranilate synthase component 2 (trpG).